The following is a 292-amino-acid chain: Acetylglutamate kinase (292 aa).

Substrate is bound by residues 64 to 65 (GG), Arg-86, and Asn-190.

It belongs to the acetylglutamate kinase family. ArgB subfamily.

Its subcellular location is the cytoplasm. The catalysed reaction is N-acetyl-L-glutamate + ATP = N-acetyl-L-glutamyl 5-phosphate + ADP. Its pathway is amino-acid biosynthesis; L-arginine biosynthesis; N(2)-acetyl-L-ornithine from L-glutamate: step 2/4. Functionally, catalyzes the ATP-dependent phosphorylation of N-acetyl-L-glutamate. The polypeptide is Acetylglutamate kinase (Trichlorobacter lovleyi (strain ATCC BAA-1151 / DSM 17278 / SZ) (Geobacter lovleyi)).